A 396-amino-acid polypeptide reads, in one-letter code: MAGVNVGDDKLVFESSEAVTVAPTFEALNLKEDLLRGIYAYNFEKPSAIQQRAIIPIIRGRDVIAQAQSGTGKTATFSISMLQSIDTNLRETQALVLSPTRELAVQIQTVVLALGDYMNVSCHACIGGTSVGEDIRKLEAGQQVVSGTPGRVFDMIRRRNLRTKDIKMLILDESDELLNKGFKDQIYDIYRYLPPATQVVVVSATLPHDVLEMTTKFMTDPVRILVKRDELTLEGIKQFFVAVEKEDWKFDTLCDLYDTLTITQAVIFCNTRRKVDWLTEKMREANFTVSSMHGEMVQKERDAIMAEFRGGQSRVLITTDVWARGIDVQQVSLVINYDLPTSRENYLHRIGRSGRFGRKGVAINFVTVDDVRILRDIEQYYSTQIDEMPMNVAELT.

The Q motif motif lies at P23–Q51. The region spanning I54–I224 is the Helicase ATP-binding domain. A67–T74 contributes to the ATP binding site. The DEAD box signature appears at D172–D175. Positions G235–T396 constitute a Helicase C-terminal domain.

This sequence belongs to the DEAD box helicase family. DDX48/FAL1 subfamily.

The protein localises to the nucleus. The protein resides in the nucleolus. It catalyses the reaction ATP + H2O = ADP + phosphate + H(+). ATP-dependent RNA helicase involved in 40S ribosomal subunit biogenesis. Required for the processing and cleavage of 35S pre-rRNA at sites A0, A1, and A2, leading to mature 18S rRNA. The polypeptide is ATP-dependent RNA helicase FAL1 (FAL1) (Cryptococcus neoformans var. neoformans serotype D (strain B-3501A) (Filobasidiella neoformans)).